The primary structure comprises 64 residues: Large ribosomal subunit protein uL30 (64 aa).

The segment at 1–22 (MSEQVKRVRVTQVGSPIGRKPG) is disordered.

Belongs to the universal ribosomal protein uL30 family. In terms of assembly, part of the 50S ribosomal subunit.

This is Large ribosomal subunit protein uL30 from Acidiphilium cryptum (strain JF-5).